A 201-amino-acid chain; its full sequence is U1 small nuclear ribonucleoprotein C (201 aa).

A Matrin-type zinc finger spans residues 4–36 (YYCEYCDIYLTHSSPVGRRQHNQGRKHISAKIE). Residues 137 to 154 (IQKPYNNFDNKNNNYNNK) show a composition bias toward low complexity. Positions 137–176 (IQKPYNNFDNKNNNYNNKPITNSSYKNDKQDYRNNNENND) are disordered.

It belongs to the U1 small nuclear ribonucleoprotein C family. In terms of assembly, U1 snRNP is composed of the 7 core Sm proteins B/B', D1, D2, D3, E, F and G that assemble in a heptameric protein ring on the Sm site of the small nuclear RNA to form the core snRNP, and at least 3 U1 snRNP-specific proteins U1-70K, U1-A and U1-C. U1-C interacts with U1 snRNA and the 5' splice-site region of the pre-mRNA.

It localises to the nucleus. In terms of biological role, component of the spliceosomal U1 snRNP, which is essential for recognition of the pre-mRNA 5' splice-site and the subsequent assembly of the spliceosome. U1-C is directly involved in initial 5' splice-site recognition for both constitutive and regulated alternative splicing. The interaction with the 5' splice-site seems to precede base-pairing between the pre-mRNA and the U1 snRNA. Stimulates commitment or early (E) complex formation by stabilizing the base pairing of the 5' end of the U1 snRNA and the 5' splice-site region. This Plasmodium yoelii yoelii protein is U1 small nuclear ribonucleoprotein C.